Reading from the N-terminus, the 405-residue chain is Teichoic acid D-alanyltransferase (405 aa).

The Extracellular segment spans residues 1–9 (MLNLQPYEN). Residues 10–29 (PQYFVYLIIALLPVIIGMFK) traverse the membrane as a helical segment. Topologically, residues 30-33 (GFRM) are cytoplasmic. The chain crosses the membrane as a helical span at residues 34-49 (HWYESIFSLVFLVLIF). The Extracellular portion of the chain corresponds to 50–53 (DADK). Residues 54-80 (WPQGKALLGYVVFNLLLVYAYFKYRTR) traverse the membrane as a helical segment. The Cytoplasmic portion of the chain corresponds to 81 to 86 (EGSKNS). A helical membrane pass occupies residues 87–111 (TAVFYLSVALGIAHVAVVKFTPLFQ). At 112–121 (HHGSILGFLG) the chain is on the extracellular side. The helical transmembrane segment at 122-138 (ISYLTFRVVGTIMEIRD) threads the bilayer. Residues 139-145 (GSIKDLN) lie on the Cytoplasmic side of the membrane. Residues 146–175 (MWKFIQFLLFFPTISSGPIDRYRRFVKDYD) lie within the membrane without spanning it. At 176–179 (RVPD) the chain is on the cytoplasmic side. Residues 180–223 (PEHYAQLVTKAIHYLMLGFLYKFILGYIFGTLWLPSVEHMAMAS) traverse the membrane as a helical segment. At 224–232 (RGGAFLGLS) the chain is on the extracellular side. Residues 233-264 (WPVVGVMYAYSGYLFFDFAGYSLFAVAISYLM) traverse the membrane as a helical segment. Residues 265–274 (GIETPMNFNK) are Cytoplasmic-facing. Residues 275–310 (PWSHITSRLLNRWQLSLSFWFRDYIYMRFVFFMMKH) lie within the membrane without spanning it. Over 311 to 315 (KWIKS) the chain is Cytoplasmic. Residues 316–335 (RVWTAFVGYLVLFLIMGIWH) traverse the membrane as a helical segment. Residue histidine 335 is part of the active site. Topologically, residues 336–338 (GET) are extracellular. Residues 339–372 (WYYIVYGLFHAMLINLTDAWLRFKKKHKDFFPHN) traverse the membrane as a helical segment. Topologically, residues 373-378 (RATHYP) are cytoplasmic. Residues 379–399 (SPFSMTANAVCFSFLIFSGFL) form a helical membrane-spanning segment. Residues 400 to 405 (DKLWFH) lie on the Extracellular side of the membrane.

This sequence belongs to the membrane-bound acyltransferase family.

It localises to the cell membrane. It functions in the pathway cell wall biogenesis; lipoteichoic acid biosynthesis. Its function is as follows. O-acyltransferase that catalyzes D-alanylation of both teichoic acid and lipoteichoic acid (LTA). D-alanylation of LTA plays an important role in modulating the properties of the cell wall in Gram-positive bacteria, influencing the net charge of the cell wall. Catalyzes D-alanylation from DltC carrier protein. This chain is Teichoic acid D-alanyltransferase, found in Lacticaseibacillus rhamnosus (Lactobacillus rhamnosus).